Consider the following 492-residue polypeptide: Solute carrier family 2, facilitated glucose transporter member 1 (492 aa).

Methionine 1 carries the N-acetylmethionine modification. The Cytoplasmic segment spans residues 1 to 11; the sequence is MEPSSKKLTGR. The chain crosses the membrane as a helical span at residues 12-33; the sequence is LMLAVGGAVLGSLQFGYNTGVI. Residues 34 to 66 lie on the Extracellular side of the membrane; the sequence is NAPQKVIEEFYNQTWVHRYGESILPTTLTTLWS. Residue asparagine 45 is glycosylated (N-linked (GlcNAc...) asparagine). Residues 67–87 form a helical membrane-spanning segment; that stretch reads LSVAIFSVGGMIGSFSVGLFV. Residues 88–90 lie on the Cytoplasmic side of the membrane; that stretch reads NRF. A helical transmembrane segment spans residues 91-112; that stretch reads GRRNSMLMMNLLAFVSAVLMGF. The Extracellular segment spans residues 113-120; the sequence is SKLGKSFE. Residues 121-144 traverse the membrane as a helical segment; the sequence is MLILGRFIIGVYCGLTTGFVPMYV. Threonine 137 serves as a coordination point for cytochalasin B. At 145–155 the chain is on the cytoplasmic side; the sequence is GEVSPTALRGA. Residues 156 to 176 traverse the membrane as a helical segment; the sequence is LGTLHQLGIVVGILIAQVFGL. The Extracellular segment spans residues 177 to 185; the sequence is DSIMGNKDL. Residues 186–206 form a helical membrane-spanning segment; it reads WPLLLSIIFIPALLQCIVLPF. Over 207 to 271 the chain is Cytoplasmic; that stretch reads CPESPRFLLI…LFRSPAYRQP (65 aa). Serine 226 bears the Phosphoserine; by PKC/PRKCB mark. Residues 272 to 293 traverse the membrane as a helical segment; that stretch reads ILIAVVLQLSQQLSGINAVFYY. A cytochalasin B-binding site is contributed by glutamine 282. Residues 282–283 and asparagine 288 each bind D-glucose; that span reads QQ. The Extracellular segment spans residues 294 to 306; sequence STSIFEKAGVQQP. The helical transmembrane segment at 307–328 threads the bilayer; it reads VYATIGSGIVNTAFTVVSLFVV. D-glucose is bound at residue asparagine 317. Over 329–334 the chain is Cytoplasmic; that stretch reads ERAGRR. A helical membrane pass occupies residues 335–355; sequence TLHLIGLAGMAGCAILMTIAL. Over 356–365 the chain is Extracellular; the sequence is ALLEQLPWMS. Residues 366-388 traverse the membrane as a helical segment; the sequence is YLSIVAIFGFVAFFEVGPGPIPW. Glutamate 380 is a binding site for D-glucose. Residue tryptophan 388 participates in cytochalasin B binding. Over 389-401 the chain is Cytoplasmic; the sequence is FIVAELFSQGPRP. Residues 402-422 traverse the membrane as a helical segment; it reads AAIAVAGFSNWTSNFIVGMCF. Asparagine 411 is a cytochalasin B binding site. The Extracellular portion of the chain corresponds to 423-429; sequence QYVEQLC. The helical transmembrane segment at 430–450 threads the bilayer; that stretch reads GPYVFIIFTVLLVLFFIFTYF. Over 451–492 the chain is Cytoplasmic; the sequence is KVPETKGRTFDEIASGFRQGGASQSDKTPEELFHPLGADSQV. Serine 465 carries the post-translational modification Phosphoserine. The disordered stretch occupies residues 468-492; that stretch reads RQGGASQSDKTPEELFHPLGADSQV. Position 478 is a phosphothreonine (threonine 478). Phosphoserine is present on serine 490.

The protein belongs to the major facilitator superfamily. Sugar transporter (TC 2.A.1.1) family. Glucose transporter subfamily. As to quaternary structure, interacts with GIPC (via PDZ domain). Found in a complex with ADD2, DMTN and SLC2A1. Interacts (via C-terminus cytoplasmic region) with DMTN isoform 2. Interacts with SNX27; the interaction is required when endocytosed to prevent degradation in lysosomes and promote recycling to the plasma membrane. Interacts with STOM. Interacts with SGTA (via Gln-rich region). Interacts with isoform 1 of BSG. Phosphorylation at Ser-226 by PKC promotes glucose uptake by increasing cell membrane localization. As to expression, detected in erythrocytes (at protein level). Expressed at variable levels in many human tissues.

It is found in the cell membrane. The protein localises to the melanosome. The protein resides in the photoreceptor inner segment. It catalyses the reaction D-glucose(out) = D-glucose(in). It participates in carbohydrate degradation. With respect to regulation, the uptake of glucose is inhibited by cytochalasin B and Phe-amide core-scaffold inhibitors GLUT-i1 and GLUT-i2. These inhibitors bind in the central cavity of the inward-open state and overlap the glucose-binding site. Glucose uptake is increased in response to phorbol ester 12-O-tetradecanoylphorbol-13-acetate (TPA) treatment: TPA-induced glucose uptake requires phosphorylation at Ser-226. Interacts with SMIM43; the interaction may promote SLC2A1-mediated glucose transport to meet the energy needs of mesendoderm differentiation. In terms of biological role, facilitative glucose transporter, which is responsible for constitutive or basal glucose uptake. Has a very broad substrate specificity; can transport a wide range of aldoses including both pentoses and hexoses. Most important energy carrier of the brain: present at the blood-brain barrier and assures the energy-independent, facilitative transport of glucose into the brain. In association with BSG and NXNL1, promotes retinal cone survival by increasing glucose uptake into photoreceptors. Required for mesendoderm differentiation. The sequence is that of Solute carrier family 2, facilitated glucose transporter member 1 from Homo sapiens (Human).